We begin with the raw amino-acid sequence, 568 residues long: Periplasmic trehalase (568 aa).

An N-terminal signal peptide occupies residues 1 to 39 (MPHVVARSGDVMSSAAPPSCTSLLGLSLSMFVAPCTLTA). Residues Arg169, 176-177 (WD), Asn213, 222-224 (RSQ), 294-296 (RPE), and Gly327 contribute to the substrate site. Catalysis depends on proton donor/acceptor residues Asp329 and Glu511. Glu526 is a substrate binding site.

It belongs to the glycosyl hydrolase 37 family.

It is found in the periplasm. It catalyses the reaction alpha,alpha-trehalose + H2O = alpha-D-glucose + beta-D-glucose. Provides the cells with the ability to utilize trehalose at high osmolarity by splitting it into glucose molecules that can subsequently be taken up by the phosphotransferase-mediated uptake system. This Xanthomonas oryzae pv. oryzae (strain MAFF 311018) protein is Periplasmic trehalase.